Here is a 344-residue protein sequence, read N- to C-terminus: Fructose-1,6-bisphosphatase class 1 (344 aa).

Mg(2+) is bound by residues Glu-92, Asp-115, Leu-117, and Asp-118. Substrate is bound by residues 118 to 121, Asn-211, Tyr-244, and Lys-274; that span reads DGSS. Position 280 (Glu-280) interacts with Mg(2+).

It belongs to the FBPase class 1 family. As to quaternary structure, homotetramer. Requires Mg(2+) as cofactor.

The protein localises to the cytoplasm. It catalyses the reaction beta-D-fructose 1,6-bisphosphate + H2O = beta-D-fructose 6-phosphate + phosphate. Its pathway is carbohydrate biosynthesis; gluconeogenesis. In Aeromonas hydrophila subsp. hydrophila (strain ATCC 7966 / DSM 30187 / BCRC 13018 / CCUG 14551 / JCM 1027 / KCTC 2358 / NCIMB 9240 / NCTC 8049), this protein is Fructose-1,6-bisphosphatase class 1.